Consider the following 309-residue polypeptide: Calcium homeostasis modulator protein 5 (309 aa).

Over 1–15 (MDAFQSILKFFLNQK) the chain is Cytoplasmic. The chain crosses the membrane as a helical span at residues 16-37 (TAIGYSFMALLTVGSERLFSLV). 2 residues coordinate a 1,2-diacyl-sn-glycero-3-phosphate: arginine 32 and valine 37. Over 38 to 45 (AFKCPCSV) the chain is Extracellular. Intrachain disulfides connect cysteine 41–cysteine 127, cysteine 43–cysteine 158, and cysteine 142–cysteine 149. Residues 46 to 70 (ENTAYGLVFLFAPAWVLLILGFFLN) form a helical membrane-spanning segment. Over 71–99 (NKAWRLFTGCCMNPKKIFPRRRCCRFFYV) the chain is Cytoplasmic. Residues 100 to 129 (LGHIILSSLVAPVMWLSVALLNGTFYECAM) traverse the membrane as a helical segment. Asparagine 121 provides a ligand contact to a 1,2-diacyl-sn-glycero-3-phosphate. The Extracellular portion of the chain corresponds to 130 to 174 (SGTRSTRLLEMICKGKPKECWEELHKVSCGKSSMAAMESEEVRLS). The helical transmembrane segment at 175-200 (LQAQSQILGWCLICSASFLSLLTTCY) threads the bilayer. Residues 201 to 309 (ARCRSKVSYL…MILVGTAQSL (109 aa)) lie on the Cytoplasmic side of the membrane. A 1,2-diacyl-sn-glycero-3-phosphate is bound at residue arginine 202.

This sequence belongs to the CALHM family. In terms of assembly, oligomerizes to form undecameric cone-shaped channels.

The protein resides in the membrane. May assemble to form large pore channels with gating and ion conductance likely regulated by membrane lipids. This is Calcium homeostasis modulator protein 5 from Mus musculus (Mouse).